A 203-amino-acid chain; its full sequence is Guanylate kinase (203 aa).

The region spanning 3 to 181 (GTLYIVAAPS…AVSEMCAIFT (179 aa)) is the Guanylate kinase-like domain. Residue 10–17 (APSGAGKS) participates in ATP binding.

The protein belongs to the guanylate kinase family.

It is found in the cytoplasm. It carries out the reaction GMP + ATP = GDP + ADP. Its function is as follows. Essential for recycling GMP and indirectly, cGMP. The sequence is that of Guanylate kinase from Xanthomonas campestris pv. campestris (strain 8004).